Reading from the N-terminus, the 455-residue chain is L-serine dehydratase (455 aa).

The protein belongs to the iron-sulfur dependent L-serine dehydratase family. Requires [4Fe-4S] cluster as cofactor.

It catalyses the reaction L-serine = pyruvate + NH4(+). It participates in carbohydrate biosynthesis; gluconeogenesis. This is L-serine dehydratase (sdaA) from Helicobacter pylori (strain ATCC 700392 / 26695) (Campylobacter pylori).